The chain runs to 87 residues: Small ribosomal subunit protein bS20 (87 aa).

The interval 1–27 (MANSVQATKRARQAEKHRQHNAGMRAA) is disordered. Positions 9 to 20 (KRARQAEKHRQH) are enriched in basic residues.

Belongs to the bacterial ribosomal protein bS20 family.

Its function is as follows. Binds directly to 16S ribosomal RNA. This is Small ribosomal subunit protein bS20 from Hydrogenovibrio crunogenus (strain DSM 25203 / XCL-2) (Thiomicrospira crunogena).